The following is a 390-amino-acid chain: Chorismate synthase (390 aa).

The NADP(+) site is built by arginine 39 and arginine 45. Residues 132–134, 253–254, glycine 298, 313–317, and arginine 339 each bind FMN; these read RSS, NA, and KPIPT.

Belongs to the chorismate synthase family. As to quaternary structure, homotetramer. FMNH2 serves as cofactor.

The enzyme catalyses 5-O-(1-carboxyvinyl)-3-phosphoshikimate = chorismate + phosphate. It participates in metabolic intermediate biosynthesis; chorismate biosynthesis; chorismate from D-erythrose 4-phosphate and phosphoenolpyruvate: step 7/7. In terms of biological role, catalyzes the anti-1,4-elimination of the C-3 phosphate and the C-6 proR hydrogen from 5-enolpyruvylshikimate-3-phosphate (EPSP) to yield chorismate, which is the branch point compound that serves as the starting substrate for the three terminal pathways of aromatic amino acid biosynthesis. This reaction introduces a second double bond into the aromatic ring system. This chain is Chorismate synthase, found in Bacillus cytotoxicus (strain DSM 22905 / CIP 110041 / 391-98 / NVH 391-98).